The primary structure comprises 262 residues: Small ribosomal subunit protein eS1 (262 aa).

It belongs to the eukaryotic ribosomal protein eS1 family. As to quaternary structure, component of the small ribosomal subunit. Mature ribosomes consist of a small (40S) and a large (60S) subunit. The 40S subunit contains about 33 different proteins and 1 molecule of RNA (18S). The 60S subunit contains about 49 different proteins and 3 molecules of RNA (25S, 5.8S and 5S).

The protein resides in the cytoplasm. This is Small ribosomal subunit protein eS1 from Theileria annulata.